We begin with the raw amino-acid sequence, 210 residues long: Protein RFS1 (210 aa).

The 200-residue stretch at 4–203 folds into the Flavodoxin-like domain; it reads VAILIYSVDD…RVHQLQGKAF (200 aa).

It belongs to the WrbA family.

The protein resides in the cytoplasm. Its subcellular location is the membrane raft. The chain is Protein RFS1 (RFS1) from Saccharomyces cerevisiae (strain ATCC 204508 / S288c) (Baker's yeast).